The sequence spans 332 residues: NADH-quinone oxidoreductase subunit H (332 aa).

Transmembrane regions (helical) follow at residues 11–31 (TYKI…IVWL), 77–97 (VIFI…WAVI), 110–130 (VGVL…IMGG), 156–176 (IGVI…NDII), 182–202 (LWFI…ALAE), 240–260 (NILL…LSPI), 268–288 (IPGA…FALV), and 307–327 (IFLP…FYFN).

It belongs to the complex I subunit 1 family. NDH-1 is composed of 14 different subunits. Subunits NuoA, H, J, K, L, M, N constitute the membrane sector of the complex.

Its subcellular location is the cell inner membrane. It carries out the reaction a quinone + NADH + 5 H(+)(in) = a quinol + NAD(+) + 4 H(+)(out). Functionally, NDH-1 shuttles electrons from NADH, via FMN and iron-sulfur (Fe-S) centers, to quinones in the respiratory chain. The immediate electron acceptor for the enzyme in this species is believed to be ubiquinone. Couples the redox reaction to proton translocation (for every two electrons transferred, four hydrogen ions are translocated across the cytoplasmic membrane), and thus conserves the redox energy in a proton gradient. This subunit may bind ubiquinone. This is NADH-quinone oxidoreductase subunit H from Pelagibacter ubique (strain HTCC1062).